Here is a 334-residue protein sequence, read N- to C-terminus: tRNA methyltransferase 10 homolog A (334 aa).

2 disordered regions span residues 1–101 (MSLE…SRKR) and 290–334 (PLTE…EQNS). The segment covering 26–40 (HAGNNTPLQENSSAP) has biased composition (polar residues). Positions 62-94 (KQWEDQRELRKQKRKEKRQKRKLERQAQAEHNI) form a coiled coil. Over residues 71 to 84 (RKQKRKEKRQKRKL) the composition is skewed to basic residues. Residues 85–98 (ERQAQAEHNIDANS) show a composition bias toward basic and acidic residues. In terms of domain architecture, SAM-dependent MTase TRM10-type spans 98–289 (SRKRFRHEVQ…SVLPQRKGAI (192 aa)). The segment covering 305–317 (QEDGEDSDSDSSI) has biased composition (acidic residues).

The protein belongs to the class IV-like SAM-binding methyltransferase superfamily. TRM10 family.

The catalysed reaction is guanosine(9) in tRNA + S-adenosyl-L-methionine = N(1)-methylguanosine(9) in tRNA + S-adenosyl-L-homocysteine + H(+). S-adenosyl-L-methionine-dependent guanine N(1)-methyltransferase that catalyzes the formation of N(1)-methylguanine at position 9 (m1G9) in tRNAs. Probably not able to catalyze formation of N(1)-methyladenine at position 9 (m1A9) in tRNAs. This chain is tRNA methyltransferase 10 homolog A (trmt10a), found in Xenopus tropicalis (Western clawed frog).